The primary structure comprises 91 residues: Salivary lectin pathway inhibitor (91 aa).

A signal peptide spans 1–21 (MGLTETTLVLVSLAFFASAVA). N-linked (GlcNAc...) asparagine glycans are attached at residues asparagine 26 and asparagine 87.

It belongs to the salp14 family. Post-translationally, glycosylated; deglycosylation largely abrogates the complement inhibitory effect. In terms of tissue distribution, nymph salivary gland (at protein level). Saliva (at protein level). Not detected in midgut.

It localises to the secreted. Functionally, inhibits the lectin pathway of complement system activation in the host by reducing binding of mannose-binding lectin and L-ficolin to their ligands. Does not affect the classical and alternative pathways of complement system activation in the host. (Microbial infection) Protects Borrelia garinii (strain A87S) from host complement-mediated killing by preventing deposition of host C5b-9 membrane attack complexes on the surface of spirochetes. Inhibits phagocytosis of B.garinii (strain A87S) by human neutrophils. Impairs Borrelia-induced complement-mediated chemotaxis of human polymorphonuclear leukocytes. In terms of biological role, (Microbial infection) Protects Borrelia burgdorferi (strain N40), which is resistant to normal human serum, from Borrelia-opsonizing antibody-mediated complement-dependent killing. This chain is Salivary lectin pathway inhibitor, found in Ixodes scapularis (Black-legged tick).